Consider the following 474-residue polypeptide: MAYIQLEPINEGFLSKISDLLLCRWTCRNCCQKCYECSCCQSSEDEVEILGPFPAQTPPWLVSNRSEDKEGDSDNTTSEPPATPQDTSPDRRRSSSDTSRSTYSLTRRISSLESRRPSSPLIDIKPIEFGALGAKKEIVQPTVLRKSYTPEDYFRKFEPRLYSLDSSNDDVDSLTDDEILTKYQLGMLHFSTQYDLLHNYLNVRVIEARDLPPPISYDGSRQDMAHSNPYVKICLLPDQKNSKQTGVKRKTQNPVFEERYTFEIQFLEAQRRTLLLTIVDFDKFSRHCVIGKVAMPLNEVDLVKGGHWWKAIIPSSQNEVELGELLLSLNYLPSAGRLNVDIIRAKQLLQTDMSQGSDPFVKIQLVHGLKLAKTKKTSCMRGTIDPFYNESFSFKVPQEELENVSLVFTVYGHNMKTSNDFIGRIVIGQYASGSPESNHWRRMLNSNRTAVEQWHSLRSRAECDRVSPASLEVT.

The tract at residues 54–112 (PAQTPPWLVSNRSEDKEGDSDNTTSEPPATPQDTSPDRRRSSSDTSRSTYSLTRRISSL) is disordered. The span at 96–112 (SDTSRSTYSLTRRISSL) shows a compositional bias: low complexity. 2 consecutive C2 domains span residues 184–310 (QLGM…HWWK) and 321–455 (ELGE…EQWH).

The protein belongs to the synaptotagmin family.

The protein localises to the membrane. In terms of biological role, may play a role in dendrite formation by melanocytes. The chain is Synaptotagmin-17 (syt17) from Xenopus tropicalis (Western clawed frog).